The following is a 332-amino-acid chain: uncharacterized protein (332 aa).

The protein belongs to the peptidase U32 family.

This is an uncharacterized protein from Methanocaldococcus jannaschii (strain ATCC 43067 / DSM 2661 / JAL-1 / JCM 10045 / NBRC 100440) (Methanococcus jannaschii).